Reading from the N-terminus, the 158-residue chain is 3-hydroxyacyl-[acyl-carrier-protein] dehydratase FabZ (158 aa).

His60 is an active-site residue.

Belongs to the thioester dehydratase family. FabZ subfamily.

The protein localises to the cytoplasm. The catalysed reaction is a (3R)-hydroxyacyl-[ACP] = a (2E)-enoyl-[ACP] + H2O. In terms of biological role, involved in unsaturated fatty acids biosynthesis. Catalyzes the dehydration of short chain beta-hydroxyacyl-ACPs and long chain saturated and unsaturated beta-hydroxyacyl-ACPs. The polypeptide is 3-hydroxyacyl-[acyl-carrier-protein] dehydratase FabZ (Zymomonas mobilis subsp. mobilis (strain ATCC 31821 / ZM4 / CP4)).